Consider the following 587-residue polypeptide: Deoxynucleoside triphosphate triphosphohydrolase sahd-1 (587 aa).

An HD domain is found at 92–262; it reads RFVHSLGTFS…GHDVDKMDYL (171 aa). 4 residues coordinate Zn(2+): H95, H134, D135, and D257. The disordered stretch occupies residues 554-587; that stretch reads EKFLTPRKRSPQDSPDEVSSSCSTAKRRLEFGSS. Phosphothreonine is present on T558.

This sequence belongs to the SAMHD1 family. In terms of assembly, homodimer. Homotetramer; in dGTP-bound form. Zn(2+) is required as a cofactor.

The protein localises to the nucleus. The protein resides in the chromosome. The enzyme catalyses a 2'-deoxyribonucleoside 5'-triphosphate + H2O = a 2'-deoxyribonucleoside + triphosphate + H(+). Its activity is regulated as follows. Allosterically activated and regulated by GTP or dGTP. Allosteric activation promotes the formation of highly active homotetramers. Phosphorylation impairs homotetramerization, thereby inhibiting dNTPase activity. Has deoxynucleoside triphosphate (dNTPase) activity. dNTPase activity acts as a regulator of DNA precursor pools by regulating dNTP pools. Phosphorylation acts as a switch to control dNTPase-dependent and -independent functions. The polypeptide is Deoxynucleoside triphosphate triphosphohydrolase sahd-1 (Caenorhabditis elegans).